A 146-amino-acid chain; its full sequence is Ribonuclease H (146 aa).

Residues 1-143 (MEKKVTIYTD…CDELARLAVR (143 aa)) enclose the RNase H type-1 domain. Residues Asp10, Glu48, Asp70, and Asp135 each coordinate Mg(2+).

Belongs to the RNase H family. Monomer. Mg(2+) is required as a cofactor.

The protein resides in the cytoplasm. It carries out the reaction Endonucleolytic cleavage to 5'-phosphomonoester.. Endonuclease that specifically degrades the RNA of RNA-DNA hybrids. The protein is Ribonuclease H of Chlorobium phaeovibrioides (strain DSM 265 / 1930) (Prosthecochloris vibrioformis (strain DSM 265)).